The primary structure comprises 207 residues: Protein GrpE (207 aa).

Belongs to the GrpE family. As to quaternary structure, homodimer.

It is found in the cytoplasm. Functionally, participates actively in the response to hyperosmotic and heat shock by preventing the aggregation of stress-denatured proteins, in association with DnaK and GrpE. It is the nucleotide exchange factor for DnaK and may function as a thermosensor. Unfolded proteins bind initially to DnaJ; upon interaction with the DnaJ-bound protein, DnaK hydrolyzes its bound ATP, resulting in the formation of a stable complex. GrpE releases ADP from DnaK; ATP binding to DnaK triggers the release of the substrate protein, thus completing the reaction cycle. Several rounds of ATP-dependent interactions between DnaJ, DnaK and GrpE are required for fully efficient folding. The protein is Protein GrpE of Pelodictyon phaeoclathratiforme (strain DSM 5477 / BU-1).